Here is a 352-residue protein sequence, read N- to C-terminus: Ketoisovalerate oxidoreductase subunit VorB (352 aa).

Heterotrimer of the VorA, VorB and VorC subunits.

It catalyses the reaction 3-methyl-2-oxobutanoate + 2 oxidized [2Fe-2S]-[ferredoxin] + CoA = 2-methylpropanoyl-CoA + 2 reduced [2Fe-2S]-[ferredoxin] + CO2 + H(+). In Methanothermobacter marburgensis (strain ATCC BAA-927 / DSM 2133 / JCM 14651 / NBRC 100331 / OCM 82 / Marburg) (Methanobacterium thermoautotrophicum), this protein is Ketoisovalerate oxidoreductase subunit VorB (vorB).